The primary structure comprises 189 residues: Putative manganese efflux pump MntP (189 aa).

6 consecutive transmembrane segments (helical) span residues F8–I28, I39–L59, I65–I85, L106–V126, I131–F151, and I166–F186.

Belongs to the MntP (TC 9.B.29) family.

The protein localises to the cell inner membrane. In terms of biological role, probably functions as a manganese efflux pump. The chain is Putative manganese efflux pump MntP from Gloeothece citriformis (strain PCC 7424) (Cyanothece sp. (strain PCC 7424)).